The sequence spans 827 residues: Transcription factor SOX-6 (827 aa).

The segment covering 1–10 (MSSKQATSPF) has biased composition (polar residues). The tract at residues 1–51 (MSSKQATSPFACTVDGEETMTQDLTSREKEEGSDQHPASHLPLHPIMHNKP) is disordered. Residues 25 to 34 (TSREKEEGSD) are compositionally biased toward basic and acidic residues. The residue at position 119 (T119) is a Phosphothreonine. The stretch at 184–257 (LAEKERQLST…QHKINLLQQQ (74 aa)) forms a coiled coil. Disordered stretches follow at residues 329–360 (HVSHPQINPRLKGISDRLGRNLDPYEHGGGHS) and 380–470 (SPGA…PIGG). Residues 341–357 (GISDRLGRNLDPYEHGG) show a composition bias toward basic and acidic residues. Phosphoserine is present on S399. A Phosphothreonine modification is found at T401. Residues K404 and K417 each participate in a glycyl lysine isopeptide (Lys-Gly) (interchain with G-Cter in SUMO) cross-link. 2 stretches are compositionally biased toward polar residues: residues 421 to 431 (TAQPLNLSSRP) and 439 to 461 (SPTSPTQSLFPASKTSPVNLPNK). Phosphoserine occurs at positions 439 and 442. Residues 620–688 (IKRPMNAFMV…IHLEKYPNYK (69 aa)) constitute a DNA-binding region (HMG box). Disordered stretches follow at residues 752–772 (TPSPQMTSDCSSTSASPEPSL) and 786–827 (ASLA…VSAN). Positions 795–808 (NGEDEMEAYDDYED) are enriched in acidic residues.

Homodimer. Interacts with DAZAP2. May interact with CENPK. Sumoylation inhibits the transcriptional activity.

The protein resides in the nucleus. It localises to the cytoplasm. In terms of biological role, transcription factor that plays a key role in several developmental processes, including neurogenesis, chondrocytes differentiation and cartilage formation. Specifically binds the 5'-AACAAT-3' DNA motif present in enhancers and super-enhancers and promotes expression of genes important for chondrogenesis. Required for overt chondrogenesis when condensed prechondrocytes differentiate into early stage chondrocytes: SOX5 and SOX6 cooperatively bind with SOX9 on active enhancers and super-enhancers associated with cartilage-specific genes, and thereby potentiate SOX9's ability to transactivate. Not involved in precartilaginous condensation, the first step in chondrogenesis, during which skeletal progenitors differentiate into prechondrocytes. Together with SOX5, required to form and maintain a pool of highly proliferating chondroblasts between epiphyses and metaphyses, to form columnar chondroblasts, delay chondrocyte prehypertrophy but promote hypertrophy, and to delay terminal differentiation of chondrocytes on contact with ossification fronts. Binds to the proximal promoter region of the myelin protein MPZ gene, and is thereby involved in the differentiation of oligodendroglia in the developing spinal tube. Binds to the gene promoter of MBP and acts as a transcriptional repressor. The polypeptide is Transcription factor SOX-6 (Rattus norvegicus (Rat)).